The sequence spans 941 residues: DNA mismatch repair protein MutS (941 aa).

613–620 (GPNMAGKS) provides a ligand contact to ATP.

The protein belongs to the DNA mismatch repair MutS family.

This protein is involved in the repair of mismatches in DNA. It is possible that it carries out the mismatch recognition step. This protein has a weak ATPase activity. The sequence is that of DNA mismatch repair protein MutS from Clostridium botulinum (strain Alaska E43 / Type E3).